Here is a 224-residue protein sequence, read N- to C-terminus: UPF0758 protein VCM66_0205 (224 aa).

Residues 1 to 20 are disordered; the sequence is MSLKQLPTESMPREKLLQRG. The MPN domain maps to 102–224; sequence ALTSPQQTKL…VVSFAERGWI (123 aa). Zn(2+)-binding residues include histidine 173, histidine 175, and aspartate 186. Positions 173-186 match the JAMM motif motif; that stretch reads HNHPSGVAEPSQAD.

This sequence belongs to the UPF0758 family.

The protein is UPF0758 protein VCM66_0205 of Vibrio cholerae serotype O1 (strain M66-2).